We begin with the raw amino-acid sequence, 175 residues long: ATP-dependent protease subunit HslV (175 aa).

Residue Thr2 is part of the active site. Gly158, Cys161, and Thr164 together coordinate Na(+).

This sequence belongs to the peptidase T1B family. HslV subfamily. A double ring-shaped homohexamer of HslV is capped on each side by a ring-shaped HslU homohexamer. The assembly of the HslU/HslV complex is dependent on binding of ATP.

Its subcellular location is the cytoplasm. The catalysed reaction is ATP-dependent cleavage of peptide bonds with broad specificity.. Its activity is regulated as follows. Allosterically activated by HslU binding. In terms of biological role, protease subunit of a proteasome-like degradation complex believed to be a general protein degrading machinery. This Haemophilus influenzae (strain PittGG) protein is ATP-dependent protease subunit HslV.